The primary structure comprises 987 residues: Transposase for transposon Tn4430 (987 aa).

It belongs to the transposase 7 family.

In terms of biological role, required for transposition of transposon Tn4430. The polypeptide is Transposase for transposon Tn4430 (tnpA) (Bacillus thuringiensis).